Consider the following 413-residue polypeptide: Ureide permease 5 (413 aa).

At 1-18 the chain is on the extracellular side; the sequence is MMIAQELGIYVVESKGGA. The chain crosses the membrane as a helical span at residues 19–39; sequence ILCLLLSLLCLGTWPALMALL. At 40 to 50 the chain is on the cytoplasmic side; that stretch reads ERRGRLPQHTY. A helical membrane pass occupies residues 51–71; that stretch reads LDYSITNFLAAIFIAFVFGGI. Residues 72–91 lie on the Extracellular side of the membrane; the sequence is GESTHEAPSFITQLTQIQDN. The chain crosses the membrane as a helical span at residues 92 to 112; it reads WPSVLFAMAGGVGLSIGNLAT. The Cytoplasmic segment spans residues 113-115; that stretch reads QYS. A helical transmembrane segment spans residues 116 to 136; it reads LAFVGLSVTEVTAASITVVVG. The Extracellular segment spans residues 137-149; that stretch reads TTVNYFLDNGLNR. A helical transmembrane segment spans residues 150-170; sequence ADILFSGVGCFMVAVCLGSAV. Topologically, residues 171–240 are cytoplasmic; the sequence is HSSNSADIKA…RAIKVLGKSM (70 aa). Residue 232 to 239 participates in ATP binding; sequence AIKVLGKS. A helical transmembrane segment spans residues 241–261; the sequence is VVGLGITFFAGLSFSLFSPLF. Topologically, residues 262 to 278 are extracellular; the sequence is NLATNDQWHTLKQGVPK. Residues 279 to 299 traverse the membrane as a helical segment; that stretch reads LIVYTAFFYFSLSCFVIAVAL. The Cytoplasmic segment spans residues 300 to 326; it reads NISFLYKPVLDSPRSSFREYLSDWNGR. A helical transmembrane segment spans residues 327–347; that stretch reads GWALAAGLLCGFGNGLQFMGG. At 348 to 352 the chain is on the extracellular side; the sequence is QAAGY. A helical membrane pass occupies residues 353–373; the sequence is AASDAVQALPLVSTFWGIYLF. At 374 to 384 the chain is on the cytoplasmic side; it reads GEYRRSSTRTY. A helical membrane pass occupies residues 385–405; the sequence is ALLVGMLVMFTVAVGLLMASA. The Extracellular portion of the chain corresponds to 406-413; the sequence is GERETRFT.

Belongs to the plant ureide permease (TC 2.A.7.19) family. As to expression, expressed in lateral roots, rosette leaves, stems, stipules, flower stigma, pedicels and the connective tissue between pollen sacks.

Its subcellular location is the membrane. Proton-coupled transporter that transports a wide spectrum of oxo derivatives of heterocyclic nitrogen compounds, including allantoin, uric acid and xanthine, but not adenine. Mediates transport of uracil and 5-fluorouracil (a toxic uracil analog). Functionally, proton-coupled transporter that transports a wide spectrum of oxo derivatives of heterocyclic nitrogen compounds, including allantoin, xanthine and uracil. The chain is Ureide permease 5 from Arabidopsis thaliana (Mouse-ear cress).